The primary structure comprises 177 residues: Ribosome maturation factor RimM (177 aa).

In terms of domain architecture, PRC barrel spans 98 to 177; that stretch reads DDGYYWKDLM…TIEVDWDPGF (80 aa).

Belongs to the RimM family. As to quaternary structure, binds ribosomal protein uS19.

The protein resides in the cytoplasm. Functionally, an accessory protein needed during the final step in the assembly of 30S ribosomal subunit, possibly for assembly of the head region. Essential for efficient processing of 16S rRNA. May be needed both before and after RbfA during the maturation of 16S rRNA. It has affinity for free ribosomal 30S subunits but not for 70S ribosomes. In Enterobacter sp. (strain 638), this protein is Ribosome maturation factor RimM.